Here is a 198-residue protein sequence, read N- to C-terminus: PEP-dependent dihydroxyacetone kinase 1, ADP-binding subunit DhaL (198 aa).

A DhaL domain is found at 6–194 (DWALRWLNDF…SALLFHAMLQ (189 aa)). Mg(2+)-binding residues include D30, D35, and D37. ADP-binding positions include 38–41 (HGIN), 79–80 (AS), G120, M129, R166, and 179–181 (DPG).

Homodimer. The dihydroxyacetone kinase complex is composed of a homodimer of DhaM, a homodimer of DhaK and the subunit DhaL. Mg(2+) serves as cofactor.

The protein resides in the cytoplasm. It catalyses the reaction dihydroxyacetone + phosphoenolpyruvate = dihydroxyacetone phosphate + pyruvate. It functions in the pathway polyol metabolism; glycerol degradation. Its function is as follows. ADP-binding subunit of the dihydroxyacetone kinase, which is responsible for the phosphoenolpyruvate (PEP)-dependent phosphorylation of dihydroxyacetone. DhaL-ADP is converted to DhaL-ATP via a phosphoryl group transfer from DhaM and transmits it to dihydroxyacetone binds to DhaK. The protein is PEP-dependent dihydroxyacetone kinase 1, ADP-binding subunit DhaL of Listeria innocua serovar 6a (strain ATCC BAA-680 / CLIP 11262).